Consider the following 1588-residue polypeptide: Centrosomal protein of 170 kDa (1588 aa).

The FHA domain occupies 23-73; that stretch reads IFVGRDDCELMLQSRSVDKQHAVINYDASMDEHLVKDLGSLNGTFVNDVRI. 4 disordered regions span residues 121 to 172, 299 to 323, 338 to 447, and 461 to 508; these read LSQK…MPRG, KFTS…GIQT, QNNP…EEPS, and SGSL…NPNS. Serine 141 bears the Phosphoserine mark. The span at 155–164 shows a compositional bias: basic and acidic residues; that stretch reads EALKSEEKPM. Basic and acidic residues predominate over residues 347 to 357; the sequence is ERTEEDSKSIK. Phosphoserine is present on residues serine 355 and serine 358. At tyrosine 363 the chain carries Phosphotyrosine. Residues 407-418 show a composition bias toward basic and acidic residues; it reads KKKAQSTEKHQE. Residues serine 443, serine 463, and serine 494 each carry the phosphoserine modification. At threonine 498 the chain carries Phosphothreonine. Residues serine 568, serine 577, serine 628, and serine 631 each carry the phosphoserine modification. The tract at residues 602–854 is disordered; that stretch reads ELSATVENET…PHINKQNSSV (253 aa). The segment covering 620–631 has biased composition (polar residues); that stretch reads LRSTSCTTSLAS. Threonine 639 bears the Phosphothreonine mark. The segment covering 645–654 has biased composition (basic and acidic residues); it reads NEEKLLESSR. Position 662 is a phosphoserine (serine 662). The segment covering 663-691 has biased composition (basic and acidic residues); that stretch reads EIGEKQDTELQEKEAQVYQSEKHDADRGL. Serine 718 carries the phosphoserine modification. Positions 720–731 are enriched in basic and acidic residues; the sequence is SKEKSETEKETS. A Phosphothreonine modification is found at threonine 752. Basic and acidic residues-rich tracts occupy residues 764-774 and 789-821; these read HIDKCREESSK and SKGD…KESS. A compositionally biased stretch (polar residues) spans 822–839; that stretch reads KSLVRQGSFTIDKPSSNI. Phosphoserine occurs at positions 829, 870, and 872. Residues 844–1588 form a targeting to microtubules region; the sequence is IPHINKQNSS…GEEEDVTVHE (745 aa). Residues 899–908 show a composition bias toward basic and acidic residues; it reads LREDNNKTDE. Disordered regions lie at residues 899–1222 and 1228–1247; these read LRED…RWRR and ASTS…HTRL. Residues threonine 906 and threonine 912 each carry the phosphothreonine modification. Residues 913-937 are compositionally biased toward polar residues; sequence PSYNRDNSISPESDVDTASTISLVT. 3 positions are modified to phosphoserine: serine 922, serine 925, and serine 950. Positions 967-980 are enriched in basic and acidic residues; that stretch reads DVTKSGSREKIEKK. Position 1008 is a phosphoserine (serine 1008). Residue threonine 1012 is modified to Phosphothreonine. Positions 1028–1038 are enriched in polar residues; the sequence is IMSSDQETYSC. Threonine 1047 is modified (phosphothreonine). Phosphoserine is present on serine 1048. The span at 1049–1062 shows a compositional bias: basic and acidic residues; the sequence is ADEHNIHSKLEGGK. Over residues 1075–1093 the composition is skewed to low complexity; it reads STSKSTTLPRPRPTRTSLL. Phosphoserine occurs at positions 1102, 1104, 1122, 1123, 1135, 1150, and 1155. The tract at residues 1103 to 1588 is targeting to centrosomes; that stretch reads DSELADADKA…GEEEDVTVHE (486 aa). Positions 1112 to 1128 are enriched in low complexity; it reads ASVASEVSTTSSTSKPP. The span at 1158–1173 shows a compositional bias: low complexity; sequence EATISRSSASARTAEA. A phosphoserine mark is found at serine 1188, serine 1195, serine 1200, serine 1229, serine 1231, serine 1241, serine 1260, and serine 1270. Polar residues predominate over residues 1191-1218; it reads TRANSISRLSDSKVKSMSSTHGSPSVNS. Residues 1315–1334 form a disordered region; it reads SVTSSGTAPSTTVSTAATTP. Serine 1362 carries the post-translational modification Phosphoserine. A disordered region spans residues 1370–1398; that stretch reads PLVHSKTPEGNNGRSVDSRPQPAEHPDHL. Residues 1467–1495 are a coiled coil; sequence KTSSMEISSILQELKRVEKQLQVINAMID. Residues 1511 to 1540 form a disordered region; the sequence is AILPSPPKQKSSPVNNHSSPSQTPALCPPE. A compositionally biased stretch (polar residues) spans 1518–1534; that stretch reads KQKSSPVNNHSSPSQTP. Residues serine 1521 and serine 1522 each carry the phosphoserine modification.

The protein belongs to the CEP170 family. As to quaternary structure, interacts with CCDC68 and CCDC120; leading to recruitment to centrosomes. Interacts with PLK1. Interacts with NIN. Interacts with FHDC1. Interacts with CCDC61. Interacts with TBK1; efficient complex formation may be dependent on the presence of CCDC61. Post-translationally, phosphorylated; probably by PLK1.

It localises to the cytoplasm. It is found in the cytoskeleton. The protein resides in the microtubule organizing center. The protein localises to the centrosome. Its subcellular location is the centriole. It localises to the spindle. Plays a role in microtubule organization. Required for centriole subdistal appendage assembly. This Mus musculus (Mouse) protein is Centrosomal protein of 170 kDa (Cep170).